The following is a 469-amino-acid chain: MNPEEAMRPLLMASEMMMFGAGLVALIAGSFLRRQRQWWVGVMAAAAQVGVIGVAVVQMVGPDQMAFEGAFSVDTATGVARIACAAGLLLIWAVAGAEMRASPREAETYALLMFSATGVLVLAGAEDLLLLVAGYFLASIPLYGLVGLARSAAAAEAAMKAYLMGALFGILLMLGVTILYGLTGATRYPQLAMTLSGAPAVAVAAGVVGVLAGLMFEAGGVPAHFWVPDAAQGANATAATFLTTVPKIGALVALYRLTTVLPDTLAWPVLIAVFAVISMTLGNLAAYWQQDPRRLLGWSTVSQVGYLLVPITVAGASELALPSLLFYLGGYTVTNIAAFAVTAALPGRRDLDSYRGLARTRPWLAAALVVALLGLVGTPPTAVFIGKVTTAAAAWDGRYAWLAVVVFVNTLVSLFYYLRWIIPAFGRPHETGDADQSAVQHWPARVAVLAAALSLLLGIIAGPVWQLVT.

14 helical membrane passes run Pro-9–Gly-29, Val-40–Val-60, Ala-76–Gly-96, Glu-105–Ala-125, Leu-128–Leu-148, Tyr-162–Leu-182, Val-201–Val-221, Ala-234–Leu-254, Leu-265–Ala-285, Arg-294–Ala-316, Tyr-327–Gly-347, Ala-365–Ile-385, Leu-402–Ile-422, and Val-448–Val-468.

Belongs to the complex I subunit 2 family. In terms of assembly, NDH-1 is composed of 14 different subunits. Subunits NuoA, H, J, K, L, M, N constitute the membrane sector of the complex.

The protein localises to the cell membrane. It catalyses the reaction a quinone + NADH + 5 H(+)(in) = a quinol + NAD(+) + 4 H(+)(out). In terms of biological role, NDH-1 shuttles electrons from NADH, via FMN and iron-sulfur (Fe-S) centers, to quinones in the respiratory chain. The immediate electron acceptor for the enzyme in this species is believed to be a menaquinone. Couples the redox reaction to proton translocation (for every two electrons transferred, four hydrogen ions are translocated across the cytoplasmic membrane), and thus conserves the redox energy in a proton gradient. The protein is NADH-quinone oxidoreductase subunit N of Mycobacterium sp. (strain JLS).